The primary structure comprises 428 residues: Adenylosuccinate synthetase (428 aa).

GTP is bound by residues 12–18 (GDEGKGK) and 40–42 (GHT). Catalysis depends on Asp13, which acts as the Proton acceptor. Residues Asp13 and Gly40 each contribute to the Mg(2+) site. IMP-binding positions include 13-16 (DEGK), 38-41 (NAGH), Thr128, Arg142, Gln223, Thr238, and Arg302. The active-site Proton donor is His41. 298-304 (VTTKRPR) provides a ligand contact to substrate. Residues Arg304, 330 to 332 (KLD), and 412 to 414 (GVG) contribute to the GTP site.

The protein belongs to the adenylosuccinate synthetase family. Homodimer. It depends on Mg(2+) as a cofactor.

Its subcellular location is the cytoplasm. It catalyses the reaction IMP + L-aspartate + GTP = N(6)-(1,2-dicarboxyethyl)-AMP + GDP + phosphate + 2 H(+). The protein operates within purine metabolism; AMP biosynthesis via de novo pathway; AMP from IMP: step 1/2. Functionally, plays an important role in the de novo pathway of purine nucleotide biosynthesis. Catalyzes the first committed step in the biosynthesis of AMP from IMP. The protein is Adenylosuccinate synthetase of Cutibacterium acnes (strain DSM 16379 / KPA171202) (Propionibacterium acnes).